The sequence spans 572 residues: Delta-1-pyrroline-5-carboxylate dehydrogenase, mitochondrial (572 aa).

300–305 (GQISTR) contacts NAD(+). Residue Glu-320 is the Proton acceptor of the active site. Cys-354 acts as the Nucleophile in catalysis.

It belongs to the aldehyde dehydrogenase family.

The protein localises to the mitochondrion matrix. It carries out the reaction L-glutamate 5-semialdehyde + NAD(+) + H2O = L-glutamate + NADH + 2 H(+). It functions in the pathway amino-acid degradation; L-proline degradation into L-glutamate; L-glutamate from L-proline: step 2/2. This is Delta-1-pyrroline-5-carboxylate dehydrogenase, mitochondrial (prnC) from Emericella nidulans (strain FGSC A4 / ATCC 38163 / CBS 112.46 / NRRL 194 / M139) (Aspergillus nidulans).